A 190-amino-acid chain; its full sequence is Probable nicotinate-nucleotide adenylyltransferase (190 aa).

It belongs to the NadD family.

The enzyme catalyses nicotinate beta-D-ribonucleotide + ATP + H(+) = deamido-NAD(+) + diphosphate. It functions in the pathway cofactor biosynthesis; NAD(+) biosynthesis; deamido-NAD(+) from nicotinate D-ribonucleotide: step 1/1. Its function is as follows. Catalyzes the reversible adenylation of nicotinate mononucleotide (NaMN) to nicotinic acid adenine dinucleotide (NaAD). The sequence is that of Probable nicotinate-nucleotide adenylyltransferase from Myxococcus xanthus (strain DK1622).